A 173-amino-acid chain; its full sequence is Photosystem I assembly protein Ycf3 (173 aa).

3 TPR repeats span residues 36 to 69 (AFAYYRDGMAAQSEGEYAEALENYREALALEQGE), 73 to 106 (SYILYNMGLIYQSNGELDKALEYYHQALELNPRL), and 121 to 154 (GELSLQAGDEETAEALFNEAAQYWIRAIRIAPNN).

Belongs to the Ycf3 family.

The protein localises to the cellular thylakoid membrane. Functionally, essential for the assembly of the photosystem I (PSI) complex. May act as a chaperone-like factor to guide the assembly of the PSI subunits. This chain is Photosystem I assembly protein Ycf3, found in Synechococcus sp. (strain JA-2-3B'a(2-13)) (Cyanobacteria bacterium Yellowstone B-Prime).